The following is a 149-amino-acid chain: HMG1/2-like protein (149 aa).

Basic and acidic residues-rich tracts occupy residues 1 to 15 and 35 to 44; these read MKGG…KAET and KGKEPKDPNK. Disordered regions lie at residues 1 to 52 and 112 to 149; these read MKGG…PSAF and AYNK…EDDD. A DNA-binding region (HMG box) is located at residues 45 to 114; that stretch reads PKRPPSAFFV…EYEITLQAYN (70 aa). Over residues 134–149 the composition is skewed to acidic residues; sequence NDEDEDEEDEEDEDDD.

Belongs to the HMGB family.

The protein resides in the nucleus. This chain is HMG1/2-like protein, found in Vicia faba (Broad bean).